Consider the following 393-residue polypeptide: MNQGTPHIVLAGGGTAGHVNPLLAVAGAIRDIEPTAQVTVIGTAVGLEKDLVPEAGYELDTIEKVPFPRRPNLYMLRFPAKWKRETAKVRSILETRHADVVAGFGGYASAPVYATAHKMGIPIAIHEQNARAGMANKLGARWADFIGTVYEGTGLKPRAGADVERVGLPLRPAIASLTKRIGDDRAAVRRESAAQLGVDPNRPLVLVTGGSLGAQSLNRAIASSAADLLAHAQIIHLTGRGKISEVRELVTASAGADVLTGIGPESAGQGDYHTAEYLERIDLAFACADLVICRAGAGSVSELAALGLPAIYVPLPIGNGEQRFNAEPVVNAGGGLLVADKDLTPQWVHEHVPDLLADHERLAEFGRKAWEYGIRNAAEIMARHVLQLAEPSK.

UDP-N-acetyl-alpha-D-glucosamine contacts are provided by residues 15-17 (TAG), N129, R171, S211, and Q322.

This sequence belongs to the glycosyltransferase 28 family. MurG subfamily.

It localises to the cell membrane. The enzyme catalyses di-trans,octa-cis-undecaprenyl diphospho-N-acetyl-alpha-D-muramoyl-L-alanyl-D-glutamyl-meso-2,6-diaminopimeloyl-D-alanyl-D-alanine + UDP-N-acetyl-alpha-D-glucosamine = di-trans,octa-cis-undecaprenyl diphospho-[N-acetyl-alpha-D-glucosaminyl-(1-&gt;4)]-N-acetyl-alpha-D-muramoyl-L-alanyl-D-glutamyl-meso-2,6-diaminopimeloyl-D-alanyl-D-alanine + UDP + H(+). It functions in the pathway cell wall biogenesis; peptidoglycan biosynthesis. Functionally, cell wall formation. Catalyzes the transfer of a GlcNAc subunit on undecaprenyl-pyrophosphoryl-MurNAc-pentapeptide (lipid intermediate I) to form undecaprenyl-pyrophosphoryl-MurNAc-(pentapeptide)GlcNAc (lipid intermediate II). This is UDP-N-acetylglucosamine--N-acetylmuramyl-(pentapeptide) pyrophosphoryl-undecaprenol N-acetylglucosamine transferase from Bifidobacterium longum (strain DJO10A).